We begin with the raw amino-acid sequence, 631 residues long: MSEQTANKETRGFQSEVKQLLHLMIHSLYSNKEIFLRELISNASDASDKLRFKALSNGDLYEGNADLGVKLSFNEAANTLTISDNGIGMSREDVIEHLGTIAKSGTADFFSKLSEDQSKDSQLIGQFGVGFYSAFIVADAVTVRTRAAGSEKDQGVQWHSEGEGDYTIEDITKESRGTDIILHMREEGKEFLNEWRLKEVIGKYSDHIGIPVSIWTVEKDEEGKDKEGKWEQVNKAQALWTRSKSDIEDAEYQEFYKHVSHDFADPLTWSHNKVEGKNDYTSLLYIPAKAPFDMMNRDHKSGLKLYVQRVFIMDDAEQFMPTYLRFVKGLIDSNDLPLNVSREILQDNKVTQSLRSACTKRVLGMLEKMAKKDDEKYLTFWKQFGQVLKEGLAEDLANKEKIAGLLRFATTEKDSSEQALGLAGYVERMKEEQDKIFYLTADSYAAAKNSPHLEQFKAKGIEVVLMYDRIDEWLMSYLTEFDGKQFQSITKAGLDLSKFEDEAEKEKHKETEEEFKSVVERTKSYLGDRVKEVRTTFKLATTPAVVVTDDFEMGTQMAKLLEAAGQAAPEVKYIFEINPDHALVKQMADEADEEAFGRWVEMLLGQAMLAERGSLEDPSQFLSAMNQLLAK.

The a; substrate-binding stretch occupies residues 1-342 (MSEQTANKET…SNDLPLNVSR (342 aa)). The b stretch occupies residues 343 to 559 (EILQDNKVTQ…DFEMGTQMAK (217 aa)). Residues 560–631 (LLEAAGQAAP…LSAMNQLLAK (72 aa)) are c.

It belongs to the heat shock protein 90 family. As to quaternary structure, homodimer.

It is found in the cytoplasm. Functionally, molecular chaperone. Has ATPase activity. This chain is Chaperone protein HtpG, found in Aliivibrio fischeri (strain ATCC 700601 / ES114) (Vibrio fischeri).